Consider the following 242-residue polypeptide: Carboxy-S-adenosyl-L-methionine synthase (242 aa).

S-adenosyl-L-methionine is bound by residues Tyr39, 64-66, 89-90, 117-118, Asn132, and Arg199; these read GCS, DN, and DI.

Belongs to the class I-like SAM-binding methyltransferase superfamily. Cx-SAM synthase family. In terms of assembly, homodimer.

It carries out the reaction prephenate + S-adenosyl-L-methionine = carboxy-S-adenosyl-L-methionine + 3-phenylpyruvate + H2O. Its function is as follows. Catalyzes the conversion of S-adenosyl-L-methionine (SAM) to carboxy-S-adenosyl-L-methionine (Cx-SAM). The chain is Carboxy-S-adenosyl-L-methionine synthase from Aliivibrio fischeri (strain MJ11) (Vibrio fischeri).